The sequence spans 399 residues: Transaminase BacF (399 aa).

Pyridoxal 5'-phosphate is bound by residues 103–104 (GK), tyrosine 128, asparagine 178, tyrosine 209, and 236–238 (SFS). At lysine 239 the chain carries N6-(pyridoxal phosphate)lysine. A pyridoxal 5'-phosphate-binding site is contributed by arginine 247.

This sequence belongs to the class-I pyridoxal-phosphate-dependent aminotransferase family. As to quaternary structure, homodimer. The cofactor is pyridoxal 5'-phosphate.

It is found in the cytoplasm. Its pathway is antibiotic biosynthesis; bacilysin biosynthesis. In terms of biological role, part of the bacABCDEF operon responsible for the biosynthesis of the nonribosomally synthesized dipeptide antibiotic bacilysin, composed of L-alanine and L-anticapsin. Bacilysin is an irreversible inactivator of the glutaminase domain of glucosamine synthetase. Catalyzes the reductive amination of the C2 ketone of tetrahydro-hydroxyphenylpyruvate (H4HPP), with L-Phe as an amino donor, to yield tetrahydrotyrosine (H4Tyr) diastereomer. D-Phe is not an effective amino donor. BacF associated to BacG converts 3E,7R- and 3Z,7R-ex-H2HPP to 2S,4R,7R- and 2S,4S,7R-H4Tyr, respectively. Given that bacilysin has the 2S,4S stereochemistry in its anticapsin moiety, it is likely that the 2S,4S-H4Tyr is the diastereomer used for the biosynthesis. This is Transaminase BacF from Bacillus subtilis (strain 168).